Consider the following 78-residue polypeptide: uncharacterized protein (78 aa).

The signal sequence occupies residues 1–27 (MQNSKTDMCAALWAVTGLVLNVAVRFA).

This is an uncharacterized protein from Dryophytes versicolor (chameleon treefrog).